A 212-amino-acid chain; its full sequence is Redox-sensing transcriptional repressor Rex (212 aa).

A DNA-binding region (H-T-H motif) is located at residues 18–57 (LYYRFVNTLKSKGIDRVNSKAISEALNIESATIRRDFSYF). Residue 92–97 (GVGNLG) coordinates NAD(+).

It belongs to the transcriptional regulatory Rex family. In terms of assembly, homodimer.

The protein localises to the cytoplasm. Its function is as follows. Modulates transcription in response to changes in cellular NADH/NAD(+) redox state. The protein is Redox-sensing transcriptional repressor Rex of Staphylococcus haemolyticus (strain JCSC1435).